Reading from the N-terminus, the 337-residue chain is Porphobilinogen deaminase (337 aa).

Cys-254 carries the S-(dipyrrolylmethanemethyl)cysteine modification.

This sequence belongs to the HMBS family. It depends on dipyrromethane as a cofactor.

The enzyme catalyses 4 porphobilinogen + H2O = hydroxymethylbilane + 4 NH4(+). It functions in the pathway porphyrin-containing compound metabolism; protoporphyrin-IX biosynthesis; coproporphyrinogen-III from 5-aminolevulinate: step 2/4. In terms of biological role, tetrapolymerization of the monopyrrole PBG into the hydroxymethylbilane pre-uroporphyrinogen in several discrete steps. The polypeptide is Porphobilinogen deaminase (pda-1) (Neurospora crassa (strain ATCC 24698 / 74-OR23-1A / CBS 708.71 / DSM 1257 / FGSC 987)).